A 460-amino-acid chain; its full sequence is Serine/threonine-protein kinase cds1 (460 aa).

The FHA domain occupies 60–116 (WRFGRHKSCEVVLNGPRVSNFHFEIYQGHRNDSDESENVVFLHDHSSNGTFLNFERL). In terms of domain architecture, Protein kinase spans 167-433 (YEIIRTLGSG…ESEALQHPWF (267 aa)). ATP-binding positions include 173-181 (LGSGTFAVV) and Lys196. Asp294 (proton acceptor) is an active-site residue. A compositionally biased stretch (basic and acidic residues) spans 438 to 453 (THEHRTPPSSSEHEAT). The tract at residues 438 to 460 (THEHRTPPSSSEHEATEQLNSSS) is disordered. Thr443 is subject to Phosphothreonine.

This sequence belongs to the protein kinase superfamily. CAMK Ser/Thr protein kinase family. CHEK2 subfamily. Interacts with rad26. Post-translationally, autophosphorylated.

The enzyme catalyses L-seryl-[protein] + ATP = O-phospho-L-seryl-[protein] + ADP + H(+). It carries out the reaction L-threonyl-[protein] + ATP = O-phospho-L-threonyl-[protein] + ADP + H(+). Functionally, has a role in the DNA replication-monitoring S/G2 checkpoint system. It is responsible for blocking mitosis in the S phase. It monitors DNA synthesis by interacting with DNA polymerase alpha and sends a signal to block the onset of mitosis while DNA synthesis is in progress. Phosphorylates rad60 and dna2. In Schizosaccharomyces pombe (strain 972 / ATCC 24843) (Fission yeast), this protein is Serine/threonine-protein kinase cds1 (cds1).